Here is a 176-residue protein sequence, read N- to C-terminus: Vitamin K epoxide reductase complex subunit 1-like protein 1 (176 aa).

Topologically, residues 1–13 (MAAPVLLRVSVPR) are cytoplasmic. A helical membrane pass occupies residues 14–36 (WERVARYAVCAAGILLSIYAYHV). The Lumenal portion of the chain corresponds to 37-87 (EREKERDPEHRALCDLGPWVKCSAALASRWGRGFGLLGSIFGKDGVLNQPN). An intrachain disulfide couples Cys50 to Cys58. Asn87 serves as a coordination point for (S)-warfarin. The helical transmembrane segment at 88 to 102 (SVFGLIFYILQLLLG) threads the bilayer. The Cytoplasmic segment spans residues 103–107 (MTASA). The helical transmembrane segment at 108 to 135 (VAALILMTSSIMSVVGSLYLAYILYFVL) threads the bilayer. The Lumenal segment spans residues 136 to 138 (KEF). A disulfide bond links Cys139 and Cys142. Residues 139-160 (CIICIVTYVLNFLLLIINYKRL) form a helical membrane-spanning segment. Phylloquinone-binding residues include Cys142 and Tyr146. Tyr146 is a binding site for (S)-warfarin. Over 161–176 (VYLNEAWKRQLQPKQD) the chain is Cytoplasmic.

This sequence belongs to the VKOR family.

The protein resides in the endoplasmic reticulum membrane. The catalysed reaction is phylloquinone + [protein]-disulfide + H2O = 2,3-epoxyphylloquinone + [protein]-dithiol. It carries out the reaction phylloquinol + [protein]-disulfide = phylloquinone + [protein]-dithiol. Inhibited by warfarin (coumadin). Warfarin locks VKORC1 in both redox states into the closed conformation. Involved in vitamin K metabolism. Can reduce inactive vitamin K 2,3-epoxide to active vitamin K, and may contribute to vitamin K-mediated protection against oxidative stress. Plays a role in vitamin K-dependent gamma-carboxylation of Glu residues in target proteins. The protein is Vitamin K epoxide reductase complex subunit 1-like protein 1 (VKORC1L1) of Homo sapiens (Human).